A 400-amino-acid chain; its full sequence is Enoyl-[acyl-carrier-protein] reductase [NADH] 1 (400 aa).

Residues 48–53 (GASSGY), 74–75 (FE), 111–112 (DA), and 139–140 (LA) each bind NAD(+). Position 225 (Y225) interacts with substrate. Y235 serves as the catalytic Proton donor. Residues K244 and 273–275 (VVT) contribute to the NAD(+) site.

This sequence belongs to the TER reductase family. As to quaternary structure, monomer.

It catalyses the reaction a 2,3-saturated acyl-[ACP] + NAD(+) = a (2E)-enoyl-[ACP] + NADH + H(+). It functions in the pathway lipid metabolism; fatty acid biosynthesis. Involved in the final reduction of the elongation cycle of fatty acid synthesis (FAS II). Catalyzes the reduction of a carbon-carbon double bond in an enoyl moiety that is covalently linked to an acyl carrier protein (ACP). This chain is Enoyl-[acyl-carrier-protein] reductase [NADH] 1, found in Vibrio vulnificus (strain YJ016).